The primary structure comprises 221 residues: Probable septum site-determining protein MinC (221 aa).

It belongs to the MinC family. Interacts with MinD and FtsZ.

Its function is as follows. Cell division inhibitor that blocks the formation of polar Z ring septums. Rapidly oscillates between the poles of the cell to destabilize FtsZ filaments that have formed before they mature into polar Z rings. Prevents FtsZ polymerization. The chain is Probable septum site-determining protein MinC from Shewanella denitrificans (strain OS217 / ATCC BAA-1090 / DSM 15013).